Consider the following 162-residue polypeptide: Peptide deformylase (162 aa).

The Fe cation site is built by Cys91 and His133. Residue Glu134 is part of the active site. His137 contacts Fe cation.

This sequence belongs to the polypeptide deformylase family. Requires Fe(2+) as cofactor.

It catalyses the reaction N-terminal N-formyl-L-methionyl-[peptide] + H2O = N-terminal L-methionyl-[peptide] + formate. In terms of biological role, removes the formyl group from the N-terminal Met of newly synthesized proteins. Requires at least a dipeptide for an efficient rate of reaction. N-terminal L-methionine is a prerequisite for activity but the enzyme has broad specificity at other positions. This Finegoldia magna (strain ATCC 29328 / DSM 20472 / WAL 2508) (Peptostreptococcus magnus) protein is Peptide deformylase.